Consider the following 650-residue polypeptide: Macrolide export ATP-binding/permease protein MacB (650 aa).

The ABC transporter domain occupies 5–243 (LELKDIRRSY…AGGTEPVVNT (239 aa)). 41 to 48 (GASGSGKS) is a binding site for ATP. 5 helical membrane passes run 273–293 (LLTM…VVVG), 523–543 (LFLT…VMNI), 554–574 (ANDI…HLFF), 580–600 (VLPA…AFTL), and 613–633 (PLAL…FGWL).

This sequence belongs to the ABC transporter superfamily. Macrolide exporter (TC 3.A.1.122) family. As to quaternary structure, homodimer. Part of the tripartite efflux system MacAB-TolC, which is composed of an inner membrane transporter, MacB, a periplasmic membrane fusion protein, MacA, and an outer membrane component, TolC. The complex forms a large protein conduit and can translocate molecules across both the inner and outer membranes. Interacts with MacA.

The protein localises to the cell inner membrane. Its function is as follows. Part of the tripartite efflux system MacAB-TolC. MacB is a non-canonical ABC transporter that contains transmembrane domains (TMD), which form a pore in the inner membrane, and an ATP-binding domain (NBD), which is responsible for energy generation. Confers resistance against macrolides. In Shigella dysenteriae serotype 1 (strain Sd197), this protein is Macrolide export ATP-binding/permease protein MacB.